We begin with the raw amino-acid sequence, 94 residues long: Integration host factor subunit beta (94 aa).

The protein belongs to the bacterial histone-like protein family. Heterodimer of an alpha and a beta chain.

This protein is one of the two subunits of integration host factor, a specific DNA-binding protein that functions in genetic recombination as well as in transcriptional and translational control. The sequence is that of Integration host factor subunit beta from Brucella anthropi (strain ATCC 49188 / DSM 6882 / CCUG 24695 / JCM 21032 / LMG 3331 / NBRC 15819 / NCTC 12168 / Alc 37) (Ochrobactrum anthropi).